The primary structure comprises 1412 residues: ABC transporter C family member 3 (1412 aa).

Positions 1–34 are disordered; it reads MELEEVGVEANQPNNDQGSKKQNKNKDKKVKKEK. Residues 21–34 show a composition bias toward basic residues; the sequence is KQNKNKDKKVKKEK. A run of 6 helical transmembrane segments spans residues 115 to 135, 161 to 181, 236 to 256, 261 to 281, 346 to 366, and 379 to 399; these read FGLYFVLSWFFYAIYAASQFV, MGYYYALIMFGSAMIGSVCLY, VFQLVNNGVFALPQIIVCLAL, IGWPTFVGLGLMLAAVPFNGI, AMLIVIVAALPTAVSVLVFSS, and IFAALSYLNILRLPLGFLPII. One can recognise an ABC transmembrane type-1 1 domain in the interval 119–405; that stretch reads FVLSWFFYAI…LPIIVALGIQ (287 aa). In terms of domain architecture, ABC transporter 1 spans 439 to 662; sequence IRDATLTWNQ…QKEFSGLLQA (224 aa). 474–481 is a binding site for ATP; sequence GSVGSGKS. 5 consecutive transmembrane segments (helical) span residues 724-744, 787-807, 854-874, 875-895, and 967-987; these read WKYITVGGGFLFLMAFIFFLM, IYIGVGMTSILISAGRNFLFF, NLMATSISQFLVFFTTVVATL, IIISIITPFLLVPLAPICIIF, and WLGLRLDLLANLVTFFACLFI. Positions 735-1025 constitute an ABC transmembrane type-1 2 domain; the sequence is FLMAFIFFLM…ATLQAADTET (291 aa). In terms of domain architecture, ABC transporter 2 spans 1062 to 1296; it reads ITFDNLVMRY…PAGLLNWLVE (235 aa). 1096 to 1103 contacts ATP; that stretch reads GRTGAGKS. The segment at 1316-1412 is disordered; it reads GVNIDQITPP…DNDNSEAGDN (97 aa). Positions 1342–1351 are enriched in polar residues; the sequence is NINSPPQQSL. A compositionally biased stretch (low complexity) spans 1367–1397; the sequence is DNNNNNNNNNNNNNNNNNNNNNNNNNNNNND. Acidic residues predominate over residues 1398–1412; it reads NDNDNDNDNSEAGDN.

It belongs to the ABC transporter superfamily. ABCC family. Conjugate transporter (TC 3.A.1.208) subfamily.

The protein localises to the membrane. The protein is ABC transporter C family member 3 (abcC3) of Dictyostelium discoideum (Social amoeba).